The chain runs to 373 residues: Putative glutamate--cysteine ligase 2 (373 aa).

The protein belongs to the glutamate--cysteine ligase type 2 family. YbdK subfamily. Homodimer.

The enzyme catalyses L-cysteine + L-glutamate + ATP = gamma-L-glutamyl-L-cysteine + ADP + phosphate + H(+). In terms of biological role, ATP-dependent carboxylate-amine ligase which exhibits weak glutamate--cysteine ligase activity. The sequence is that of Putative glutamate--cysteine ligase 2 from Enterobacter sp. (strain 638).